The chain runs to 377 residues: tRNA-specific 2-thiouridylase MnmA (377 aa).

ATP contacts are provided by residues 8 to 15 (GMSGGVDS) and M34. Residues 94–96 (NPD) form an interaction with target base in tRNA region. C99 acts as the Nucleophile in catalysis. C99 and C201 form a disulfide bridge. Position 123 (G123) interacts with ATP. Residues 151–153 (KDQ) are interaction with tRNA. The active-site Cysteine persulfide intermediate is C201. An interaction with tRNA region spans residues 315–316 (RY).

It belongs to the MnmA/TRMU family.

The protein localises to the cytoplasm. It catalyses the reaction S-sulfanyl-L-cysteinyl-[protein] + uridine(34) in tRNA + AH2 + ATP = 2-thiouridine(34) in tRNA + L-cysteinyl-[protein] + A + AMP + diphosphate + H(+). Functionally, catalyzes the 2-thiolation of uridine at the wobble position (U34) of tRNA, leading to the formation of s(2)U34. The polypeptide is tRNA-specific 2-thiouridylase MnmA (Acinetobacter baylyi (strain ATCC 33305 / BD413 / ADP1)).